We begin with the raw amino-acid sequence, 1222 residues long: Protein SCP160 (1222 aa).

The segment covering 1 to 12 has biased composition (polar residues); that stretch reads MSEEQTAIDSPP. A disordered region spans residues 1–59; it reads MSEEQTAIDSPPSTVEGSVETVTTIDSPSTTASTIAATAEEHPQLEKKPTPLPSLKDLP. Low complexity predominate over residues 13–38; the sequence is STVEGSVETVTTIDSPSTTASTIAAT. Over residues 39–49 the composition is skewed to basic and acidic residues; the sequence is AEEHPQLEKKP. Thr50 is modified (phosphothreonine). A phosphoserine mark is found at Ser54, Ser63, Ser85, Ser87, and Ser89. Residues 79 to 98 are disordered; sequence KPAVSNSPSPSPSAPSLTTG. The KH 1 domain occupies 177-249; sequence PINAVIEVPS…ESVNLAKAKI (73 aa). Ser630 carries the phosphoserine modification. KH domains are found at residues 634–702, 712–771, 782–851, 861–929, and 939–1001; these read KSKM…KKYL, IITK…HEEL, GHKM…AKRV, FVTE…VEEI, and SVTK…EKKI. The residue at position 1112 (Ser1112) is a Phosphoserine. The KH 7 domain occupies 1153–1216; the sequence is YAGYVWGADT…AGVEKAGEMV (64 aa).

The protein localises to the endoplasmic reticulum membrane. Its subcellular location is the nucleus membrane. In terms of biological role, involved in the control of mitotic chromosome transmission. Required during cell division for faithful partitioning of the ER-nuclear envelope membranes which, in S.cerevisiae, enclose the duplicated chromosomes. The polypeptide is Protein SCP160 (SCP160) (Saccharomyces cerevisiae (strain ATCC 204508 / S288c) (Baker's yeast)).